Consider the following 173-residue polypeptide: ATP-dependent protease subunit HslV (173 aa).

T2 is a catalytic residue. Na(+) contacts are provided by G158, D161, and T164.

This sequence belongs to the peptidase T1B family. HslV subfamily. In terms of assembly, a double ring-shaped homohexamer of HslV is capped on each side by a ring-shaped HslU homohexamer. The assembly of the HslU/HslV complex is dependent on binding of ATP.

It is found in the cytoplasm. The enzyme catalyses ATP-dependent cleavage of peptide bonds with broad specificity.. With respect to regulation, allosterically activated by HslU binding. Functionally, protease subunit of a proteasome-like degradation complex believed to be a general protein degrading machinery. In Actinobacillus succinogenes (strain ATCC 55618 / DSM 22257 / CCUG 43843 / 130Z), this protein is ATP-dependent protease subunit HslV.